The following is a 286-amino-acid chain: Light-independent protochlorophyllide reductase iron-sulfur ATP-binding protein (286 aa).

ATP-binding positions include 10 to 15 (GIGKST) and K39. S14 contributes to the Mg(2+) binding site. [4Fe-4S] cluster contacts are provided by C95 and C129. 180–181 (NR) serves as a coordination point for ATP.

The protein belongs to the NifH/BchL/ChlL family. Homodimer. Protochlorophyllide reductase is composed of three subunits; ChlL, ChlN and ChlB. [4Fe-4S] cluster is required as a cofactor.

The enzyme catalyses chlorophyllide a + oxidized 2[4Fe-4S]-[ferredoxin] + 2 ADP + 2 phosphate = protochlorophyllide a + reduced 2[4Fe-4S]-[ferredoxin] + 2 ATP + 2 H2O. The protein operates within porphyrin-containing compound metabolism; chlorophyll biosynthesis (light-independent). In terms of biological role, component of the dark-operative protochlorophyllide reductase (DPOR) that uses Mg-ATP and reduced ferredoxin to reduce ring D of protochlorophyllide (Pchlide) to form chlorophyllide a (Chlide). This reaction is light-independent. The L component serves as a unique electron donor to the NB-component of the complex, and binds Mg-ATP. The protein is Light-independent protochlorophyllide reductase iron-sulfur ATP-binding protein of Synechococcus elongatus (strain ATCC 33912 / PCC 7942 / FACHB-805) (Anacystis nidulans R2).